Reading from the N-terminus, the 46-residue chain is Apamin (46 aa).

A signal peptide spans 1-27 (MISMLRCIYLFLSVILITSYFVTPVMP). 2 disulfide bridges follow: Cys-28–Cys-38 and Cys-30–Cys-42. Residues 40 to 41 (RR) are essential for toxin activity. At His-45 the chain carries Histidine amide.

As to expression, expressed by the venom gland.

Its subcellular location is the secreted. Toxin with unique selectivity to KCa2 channels. Potently blocks human, rat and mouse KCa2.2/KCNN2/SK2 channels (IC(50)=27-140 pM), and moderately blocks human and rat KCa2.3/KCNN3/SK3 channels (IC(50)=0.6-4 nM), and human (IC(50)=0.7-12 nM) and mouse (IC(50)=28 nM) KCa2.1/KCNN1/SK1 channels. Does not show any antimicrobial activity. In vivo, intracerebroventricular injection into rats of a dose of 1 ng results in neurodegeneration specifically in the Purkinje cells of the cerebellum, and induces seizures characterized by hypersensitivity to noise, loss of postural control, paroxystic jerking, and alternating periods of great agitation with tonic-clonic convulsions and periods of total prostration. When administered at high doses, exerts anti-inflammatory, anti-oxidative, anti-fibrotic and anti-apoptotic properties in several models of inflammatory disease, including gouty arthritis, atherosclerosis, atopic dermatitis and acute kidney injury. Down-regulates pro-inflammatory signaling pathways, such as the NF-kappaB and STAT3 pathways, probably by blocking SK channels such as KCa2.2/KCNN2/SK2 and/or KCa2.3/KCNN3/SK3 which are thought to be involved in promoting some inflammatory responses. For example in mouse and rat microglia cells, inhibits LPS-activated KCa2.2/KCNN2/SK2 channels and TLR4 expression leading to the down-regulation of the NF-kappaB, STAT, and MAPK/ERK signaling pathways and, as a consequence, decreases secretion of pro-inflammatory cytokines. This is Apamin from Apis mellifera (Honeybee).